A 397-amino-acid chain; its full sequence is MQKQNIVILGSTGSIGKSTLSVIENNPEKYHAFALVGGKNVETMFEQCIKFRPHFAALDDVNAAKILREKLIAHHIPTEVLAGQRAICELAAHPDADQIMASIVGAAGLLPTLSAVKAGKRVLLANKESLVTCGQLFIDAVKNYSAKLLPVDSEHNAIFQSLPPEAQEKIGFCPLSELGVSKIILTGSGGPFRYTPLEQFTNITPEQAVAHPNWSMGKKISVDSATMMNKGLEYIEARWLFNASAEEMEVIIHPQSIIHSMVRYVDGSVIAQMGNPDMRTPIAETMAYPHRTFAGVEPLDFFKIKELTFIEPDFNRYPNLKLAIDAFAAGQYATTAMNTANEIAVQAFLDRQISFMDIAKINLKTIEKISPYTIQNIDDVLEIDAQAREIAKTLIRE.

The NADPH site is built by T12, G13, S14, I15, G38, K39, N40, and N126. K127 is a 1-deoxy-D-xylulose 5-phosphate binding site. E128 provides a ligand contact to NADPH. Residue D152 participates in Mn(2+) binding. 1-deoxy-D-xylulose 5-phosphate is bound by residues S153, E154, S188, and H211. E154 contacts Mn(2+). Position 217 (G217) interacts with NADPH. Positions 224, 229, 230, and 233 each coordinate 1-deoxy-D-xylulose 5-phosphate. E233 serves as a coordination point for Mn(2+).

It belongs to the DXR family. Mg(2+) is required as a cofactor. Requires Mn(2+) as cofactor.

The enzyme catalyses 2-C-methyl-D-erythritol 4-phosphate + NADP(+) = 1-deoxy-D-xylulose 5-phosphate + NADPH + H(+). Its pathway is isoprenoid biosynthesis; isopentenyl diphosphate biosynthesis via DXP pathway; isopentenyl diphosphate from 1-deoxy-D-xylulose 5-phosphate: step 1/6. Its function is as follows. Catalyzes the NADPH-dependent rearrangement and reduction of 1-deoxy-D-xylulose-5-phosphate (DXP) to 2-C-methyl-D-erythritol 4-phosphate (MEP). The protein is 1-deoxy-D-xylulose 5-phosphate reductoisomerase of Haemophilus influenzae (strain PittEE).